The sequence spans 783 residues: Probable potassium transporter 2 (783 aa).

Over 1–21 (MDAEAGVGGADQLPWRQHYRN) the chain is Cytoplasmic. Residues 22 to 42 (LLLLAYQSFGVVYGDLSTSPL) form a helical membrane-spanning segment. Topologically, residues 43-61 (YVYKSTFSGRLRRYQDEQT) are extracellular. Residues 62–82 (VFGVLSLIFWTFTLIPLLKYV) traverse the membrane as a helical segment. Over 83–152 (TIVLSADDNG…FMEKHKNART (70 aa)) the chain is Cytoplasmic. Residues 153 to 173 (VLLLIVLCGASMMIGDGILTP) form a helical membrane-spanning segment. The Extracellular portion of the chain corresponds to 174 to 189 (AISVLSSMSGLKVRAT). Residues 190-210 (GLHDRSVVLLSCIVLVGLFAL) traverse the membrane as a helical segment. Topologically, residues 211–217 (QHRGTQK) are cytoplasmic. A helical transmembrane segment spans residues 218-238 (VAFMFAPIVVIWLFCIGGIGL). Residues 239–268 (YNIIHWNPRIYQALSPYYIVKFFRTTGKDG) are Extracellular-facing. The helical transmembrane segment at 269 to 289 (WIALGGILLSMTGCEAMFADL) threads the bilayer. The Cytoplasmic portion of the chain corresponds to 290 to 298 (GHFTSASVR). A helical transmembrane segment spans residues 299-319 (LAFITIIYPCLILQYMGQAAF). The Extracellular portion of the chain corresponds to 320–338 (LSKNILDMPTGFYDSIPGP). A helical membrane pass occupies residues 339-359 (IFWPVFVVATLAAVVGSQAVI). Over 360 to 390 (SATFSIVKQCHSLGCFPRVKVVHTSRWIYGQ) the chain is Cytoplasmic. Residues 391–411 (IYIPEINWILMVLCVAVTVAF) form a helical membrane-spanning segment. Over 412-422 (RDITLIGNAYG) the chain is Extracellular. A helical membrane pass occupies residues 423-443 (VACMTVMFVTTFLMALIMIFV). At 444–447 (WQKN) the chain is on the cytoplasmic side. The chain crosses the membrane as a helical span at residues 448–468 (IIFALSFFLLFGSVEVVYLSS). The Extracellular portion of the chain corresponds to 469–475 (SLMKVTQ). A helical transmembrane segment spans residues 476 to 496 (GGWVPLVLALIFMSVMYIWHY). Residues 497-783 (GTRKKYQYDL…LIEVGMAYQV (287 aa)) are Cytoplasmic-facing. A disordered region spans residues 662-691 (DLADSMTMRSTKSESLRSLQSSYEQESPNV). Polar residues predominate over residues 677–691 (LRSLQSSYEQESPNV).

It belongs to the HAK/KUP transporter (TC 2.A.72.3) family.

It localises to the cell membrane. It catalyses the reaction K(+)(in) = K(+)(out). It carries out the reaction Na(+)(in) = Na(+)(out). High-affinity potassium transporter. Can transport sodium under high sodium and low potassium concentrations in the extracellular environment. The chain is Probable potassium transporter 2 (HAK2) from Oryza sativa subsp. japonica (Rice).